The primary structure comprises 206 residues: Glutathione S-transferase class-mu 28 kDa isozyme (206 aa).

The region spanning 1-81 is the GST N-terminal domain; it reads VKLIYFNGRG…FIARKHNMMG (81 aa). Glutathione is bound by residues Tyr5, 5 to 6, Arg11, 36 to 40, Leu48, 50 to 51, and 65 to 66; these read YF, WPKIK, IV, and ES. In terms of domain architecture, GST C-terminal spans 83-206; the sequence is TDDEYYIIEK…YLSERHATAF (124 aa).

The protein belongs to the GST superfamily. Mu family. In terms of assembly, homodimer.

The catalysed reaction is RX + glutathione = an S-substituted glutathione + a halide anion + H(+). Functionally, conjugation of reduced glutathione to a wide number of exogenous and endogenous hydrophobic electrophiles. In terms of biological role, GST isoenzymes appear to play a central role in the parasite detoxification system. Other functions are also suspected including a role in increasing the solubility of haematin in the parasite gut. This is Glutathione S-transferase class-mu 28 kDa isozyme from Schistosoma japonicum (Blood fluke).